A 269-amino-acid chain; its full sequence is Glutamate racemase (269 aa).

Residues 7-8 (DS) and 39-40 (YG) each bind substrate. The active-site Proton donor/acceptor is the C70. 71-72 (NT) is a substrate binding site. The active-site Proton donor/acceptor is the C194. 195-196 (TH) is a binding site for substrate.

It belongs to the aspartate/glutamate racemases family.

The enzyme catalyses L-glutamate = D-glutamate. It participates in cell wall biogenesis; peptidoglycan biosynthesis. Provides the (R)-glutamate required for cell wall biosynthesis. This is Glutamate racemase from Roseobacter denitrificans (strain ATCC 33942 / OCh 114) (Erythrobacter sp. (strain OCh 114)).